The primary structure comprises 408 residues: tRNA pseudouridine synthase D (408 aa).

The Nucleophile role is filled by aspartate 82. Positions 157–367 (GVPNRFGEQR…MEGERRPLRV (211 aa)) constitute a TRUD domain.

Belongs to the pseudouridine synthase TruD family.

The catalysed reaction is uridine(13) in tRNA = pseudouridine(13) in tRNA. Its function is as follows. Responsible for synthesis of pseudouridine from uracil-13 in transfer RNAs. This chain is tRNA pseudouridine synthase D, found in Geobacter sulfurreducens (strain ATCC 51573 / DSM 12127 / PCA).